The primary structure comprises 347 residues: Lipoyl synthase (347 aa).

The [4Fe-4S] cluster site is built by C77, C82, C88, C103, C107, C110, and S317. Residues 89 to 306 (FADGTATFMI…MDYGKKIGFF (218 aa)) form the Radical SAM core domain.

Belongs to the radical SAM superfamily. Lipoyl synthase family. Requires [4Fe-4S] cluster as cofactor.

It is found in the cytoplasm. It carries out the reaction [[Fe-S] cluster scaffold protein carrying a second [4Fe-4S](2+) cluster] + N(6)-octanoyl-L-lysyl-[protein] + 2 oxidized [2Fe-2S]-[ferredoxin] + 2 S-adenosyl-L-methionine + 4 H(+) = [[Fe-S] cluster scaffold protein] + N(6)-[(R)-dihydrolipoyl]-L-lysyl-[protein] + 4 Fe(3+) + 2 hydrogen sulfide + 2 5'-deoxyadenosine + 2 L-methionine + 2 reduced [2Fe-2S]-[ferredoxin]. It functions in the pathway protein modification; protein lipoylation via endogenous pathway; protein N(6)-(lipoyl)lysine from octanoyl-[acyl-carrier-protein]: step 2/2. Its function is as follows. Catalyzes the radical-mediated insertion of two sulfur atoms into the C-6 and C-8 positions of the octanoyl moiety bound to the lipoyl domains of lipoate-dependent enzymes, thereby converting the octanoylated domains into lipoylated derivatives. This chain is Lipoyl synthase, found in Psychrobacter cryohalolentis (strain ATCC BAA-1226 / DSM 17306 / VKM B-2378 / K5).